A 175-amino-acid polypeptide reads, in one-letter code: ATP synthase subunit delta (175 aa).

Belongs to the ATPase delta chain family. In terms of assembly, F-type ATPases have 2 components, F(1) - the catalytic core - and F(0) - the membrane proton channel. F(1) has five subunits: alpha(3), beta(3), gamma(1), delta(1), epsilon(1). F(0) has three main subunits: a(1), b(2) and c(10-14). The alpha and beta chains form an alternating ring which encloses part of the gamma chain. F(1) is attached to F(0) by a central stalk formed by the gamma and epsilon chains, while a peripheral stalk is formed by the delta and b chains.

Its subcellular location is the cell membrane. F(1)F(0) ATP synthase produces ATP from ADP in the presence of a proton or sodium gradient. F-type ATPases consist of two structural domains, F(1) containing the extramembraneous catalytic core and F(0) containing the membrane proton channel, linked together by a central stalk and a peripheral stalk. During catalysis, ATP synthesis in the catalytic domain of F(1) is coupled via a rotary mechanism of the central stalk subunits to proton translocation. In terms of biological role, this protein is part of the stalk that links CF(0) to CF(1). It either transmits conformational changes from CF(0) to CF(1) or is implicated in proton conduction. The polypeptide is ATP synthase subunit delta (Lactococcus lactis subsp. lactis (strain IL1403) (Streptococcus lactis)).